The following is a 94-amino-acid chain: Integration host factor subunit beta (94 aa).

Belongs to the bacterial histone-like protein family. In terms of assembly, heterodimer of an alpha and a beta chain.

In terms of biological role, this protein is one of the two subunits of integration host factor, a specific DNA-binding protein that functions in genetic recombination as well as in transcriptional and translational control. The chain is Integration host factor subunit beta from Mesorhizobium japonicum (strain LMG 29417 / CECT 9101 / MAFF 303099) (Mesorhizobium loti (strain MAFF 303099)).